The sequence spans 848 residues: Glutenin, high molecular weight subunit DX5 (848 aa).

Residues 1 to 21 (MAKRLVLFVAVVVALVALTVA) form the signal peptide. Positions 124–804 (YYPGQASPQR…GQQSGQGQQG (681 aa)) are disordered. 13 stretches are compositionally biased toward low complexity: residues 126 to 137 (PGQASPQRPGQG), 145 to 166 (QGYYPTSPQQPGQWQQPEQGQP), 173 to 203 (PQQSGQLQQPAQGQQPGQGQQGQQPGQGQPG), 210 to 240 (QLQPGQLQQPAQGQQGQQPGQAQQGQQPGQG), 263 to 303 (QGQQ…GQSG), 310 to 351 (QQPG…PGQG), 359 to 411 (PGYY…PGQG), 419 to 468 (PGYY…PGQG), 476 to 527 (QGQQ…YPTS), 544 to 659 (QQPG…QGQP), 670 to 687 (GQGQQPGQWQQPGQGQPG), 709 to 727 (QQPGQGQQPGQWQQSGQGQ), and 739 to 795 (GQGQ…TGQG).

The protein belongs to the gliadin/glutenin family. As to quaternary structure, disulfide-bridge linked aggregates.

Its function is as follows. Glutenins are high-molecular weight seed storage proteins of wheat endosperm. Thought to be responsible for the visco-elastic property of wheat dough. This Triticum aestivum (Wheat) protein is Glutenin, high molecular weight subunit DX5 (GLU-1D-1D).